Consider the following 177-residue polypeptide: Adenine phosphoribosyltransferase (177 aa).

Belongs to the purine/pyrimidine phosphoribosyltransferase family. As to quaternary structure, homodimer.

It localises to the cytoplasm. The enzyme catalyses AMP + diphosphate = 5-phospho-alpha-D-ribose 1-diphosphate + adenine. It participates in purine metabolism; AMP biosynthesis via salvage pathway; AMP from adenine: step 1/1. Catalyzes a salvage reaction resulting in the formation of AMP, that is energically less costly than de novo synthesis. The polypeptide is Adenine phosphoribosyltransferase (Rhodococcus opacus (strain B4)).